The sequence spans 298 residues: Tyrosine recombinase XerC (298 aa).

The 87-residue stretch at threonine 2–valine 88 folds into the Core-binding (CB) domain. One can recognise a Tyr recombinase domain in the interval histidine 109–aspartate 288. Residues arginine 148, lysine 172, histidine 240, arginine 243, and histidine 266 contribute to the active site. Tyrosine 275 functions as the O-(3'-phospho-DNA)-tyrosine intermediate in the catalytic mechanism.

Belongs to the 'phage' integrase family. XerC subfamily. As to quaternary structure, forms a cyclic heterotetrameric complex composed of two molecules of XerC and two molecules of XerD, in which XerC interacts with XerD via its C-terminal region, XerD interacts with XerC via its C-terminal region and so on.

Its subcellular location is the cytoplasm. Its activity is regulated as follows. FtsK may regulate the catalytic switch between XerC and XerD in the heterotetrameric complex during the two steps of the recombination process. Site-specific tyrosine recombinase, which acts by catalyzing the cutting and rejoining of the recombining DNA molecules. Binds cooperatively to specific DNA consensus sequences that are separated from XerD binding sites by a short central region, forming the heterotetrameric XerC-XerD complex that recombines DNA substrates. The complex is essential to convert dimers of the bacterial chromosome into monomers to permit their segregation at cell division. It also contributes to the segregational stability of plasmids. In the complex XerC specifically exchanges the top DNA strands. The polypeptide is Tyrosine recombinase XerC (Escherichia coli (strain 55989 / EAEC)).